We begin with the raw amino-acid sequence, 438 residues long: Protein pop-1 (438 aa).

Residues 1–39 (MMADEELGDEVKVFRRDEDADDDPMISGETSEQQLADDK) are disordered. Positions 1 to 45 (MMADEELGDEVKVFRRDEDADDDPMISGETSEQQLADDKKEAVME) are sufficient for interaction with beta-catenin/sys-1. Residues 9–18 (DEVKVFRRDE) are compositionally biased toward basic and acidic residues. The segment at 88–130 (AALPMFMPLFMNPYAAALRSPSLMFPMGAMSPTFPMFPPSPVY) is involved in nuclear asymmetry. A phosphoserine; by LIT1 mark is found at Ser-118 and Ser-127. A DNA-binding region (HMG box) is located at residues 192–262 (VKKPLNAFMW…THKERYPEWS (71 aa)). Positions 250–263 (DKETHKERYPEWSA) are enriched in basic and acidic residues. Disordered regions lie at residues 250–288 (DKET…ENND), 318–351 (TDRS…PKAN), and 378–438 (TTGA…MCTI). Basic residues predominate over residues 270–279 (NKKKTKKRRD). Composition is skewed to polar residues over residues 324–339 (SDIT…SGAY) and 378–395 (TTGA…SSAG). A compositionally biased stretch (acidic residues) spans 406-418 (SESDVEEEEDEQI).

The protein belongs to the TCF/LEF family. In terms of assembly, interacts (via N-terminal region) with beta-catenin homolog sys-1. Interacts with hda-1. Interacts with bar-1. Interacts with par-5; the interaction is direct and is enhanced by lit-1-mediated pop-1 phosphorylation. The interaction also leads to the subsequent nuclear export of pop-1. Interacts (when phosphorylated on Ser-118 and Ser-127) with lit-1; the interaction is dependent on the beta-catenin-lit-1 complex. Interacts with wrm-1. Interacts with homeobox protein egl-5. Interacts with zinc finger transcription factor ref-2; the interaction is direct and facilitates transcriptional activation; transcription may be repressed by beta-catenin/sys-1. In terms of processing, phosphorylated on Ser-118 and Ser-127 by lit-1 in the beta-catenin-lit-1 complex. Phosphorylation promotes the interaction of pop-1 and par-5 and the subsequent translocation of pop-1 from the nucleus to the cytoplasm.

It localises to the nucleus. Its subcellular location is the cytoplasm. Functionally, transcription factor. Part of the Wnt signaling asymmetry pathway. Binds to the consensus sequence, 5'-(C/T)TTTG(A/T)(A/T)(G/C)-3'. Activates or represses target gene expression, depending on upstream Wnt signals and interactions with transcription co-regulators, such as beta-catenin/sys-1 or zinc finger transcription factor ref-2. Essential for the specification of the mesodermal and endodermal cell fates in early embryos. Required in many asymmetrical cell divisions in the early embryo and during larval development. Reciprocal distribution patterns of sys-1 and pop-1 in the daughters of anterior-posterior cell divisions functions in specifying cell fate; a higher sys-1 to pop-1 ratio promotes the posterior cell fate, whereas a low sys-1 to pop-1 ratio promotes the anterior fate. Involved in modulating nuclear localization or nuclear retention of sys-1. Involved in the terminal asymmetrical division of many embryonic neuroblasts; for example in the SMDD/AIY neuron lineage. In complex with ref-2, positively modulates expression of LIM/homeobox protein ttx-3 in anterior daughter cells of the SMDD/AIY lineage. Required for asymmetrical division of somatic gonadal precursor descendants which initiate axis formation required to control organ shape. Similarly, involved in asymmetrical division of seam cells, a stem cell-like lineage. Represses expression of target genes via its interaction with hda-1 histone deacetylase. Required for specification of the M lineage-derived coelomocyte and sex myoblast fate. Regulates coelomocyte fate by positively regulating proliferation and ceh-34 and possibly eya-1 expression in M.dlpa and M.drpa precursors. This chain is Protein pop-1, found in Caenorhabditis elegans.